The sequence spans 128 residues: Glycine cleavage system H protein (128 aa).

A Lipoyl-binding domain is found at 25–107 (TFKVGITDHA…YEAGWLFTVR (83 aa)). Lysine 66 bears the N6-lipoyllysine mark.

This sequence belongs to the GcvH family. The glycine cleavage system is composed of four proteins: P, T, L and H. (R)-lipoate is required as a cofactor.

Functionally, the glycine cleavage system catalyzes the degradation of glycine. The H protein shuttles the methylamine group of glycine from the P protein to the T protein. The chain is Glycine cleavage system H protein from Kocuria rhizophila (strain ATCC 9341 / DSM 348 / NBRC 103217 / DC2201).